The sequence spans 482 residues: Long chain base biosynthesis protein 1c (482 aa).

Residues 33–53 (FGIHIDGHLVVEGLLIAAILF) traverse the membrane as a helical segment.

The protein belongs to the class-II pyridoxal-phosphate-dependent aminotransferase family. In terms of assembly, heterodimer with LCB2. Component of the serine palmitoyltransferase (SPT) complex, composed of LCB1 and LCB2. It depends on pyridoxal 5'-phosphate as a cofactor.

The protein resides in the endoplasmic reticulum membrane. It catalyses the reaction L-serine + hexadecanoyl-CoA + H(+) = 3-oxosphinganine + CO2 + CoA. It functions in the pathway lipid metabolism; sphingolipid metabolism. Functionally, serine palmitoyltransferase (SPT). The heterodimer formed with LCB2 constitutes the catalytic core. This Oryza sativa subsp. japonica (Rice) protein is Long chain base biosynthesis protein 1c.